The following is a 278-amino-acid chain: ATP-dependent dethiobiotin synthetase BioD 1 (278 aa).

51 to 56 (NVGKTI) serves as a coordination point for ATP. Threonine 55 lines the Mg(2+) pocket. Residue lysine 76 is part of the active site. ATP is bound at residue aspartate 102. Mg(2+) is bound by residues aspartate 102 and glutamate 163. ATP-binding positions include 223–224 (NR) and 252–254 (PYI).

It belongs to the dethiobiotin synthetase family. Homodimer. The cofactor is Mg(2+).

It localises to the cytoplasm. The enzyme catalyses (7R,8S)-7,8-diammoniononanoate + CO2 + ATP = (4R,5S)-dethiobiotin + ADP + phosphate + 3 H(+). It functions in the pathway cofactor biosynthesis; biotin biosynthesis; biotin from 7,8-diaminononanoate: step 1/2. Catalyzes a mechanistically unusual reaction, the ATP-dependent insertion of CO2 between the N7 and N8 nitrogen atoms of 7,8-diaminopelargonic acid (DAPA, also called 7,8-diammoniononanoate) to form a ureido ring. This Haemophilus ducreyi (strain 35000HP / ATCC 700724) protein is ATP-dependent dethiobiotin synthetase BioD 1.